We begin with the raw amino-acid sequence, 285 residues long: Diphthine methyl ester synthase (285 aa).

S-adenosyl-L-methionine-binding positions include Leu-9, Asp-84, Gly-87, 112–113 (SI), Leu-163, Val-221, and His-246.

Belongs to the diphthine synthase family.

The protein resides in the cytoplasm. It catalyses the reaction 2-[(3S)-amino-3-carboxypropyl]-L-histidyl-[translation elongation factor 2] + 4 S-adenosyl-L-methionine = diphthine methyl ester-[translation elongation factor 2] + 4 S-adenosyl-L-homocysteine + 3 H(+). It functions in the pathway protein modification; peptidyl-diphthamide biosynthesis. S-adenosyl-L-methionine-dependent methyltransferase that catalyzes four methylations of the modified target histidine residue in translation elongation factor 2 (EF-2), to form an intermediate called diphthine methyl ester. The four successive methylation reactions represent the second step of diphthamide biosynthesis. This is Diphthine methyl ester synthase (dph5) from Aspergillus fumigatus (strain ATCC MYA-4609 / CBS 101355 / FGSC A1100 / Af293) (Neosartorya fumigata).